A 109-amino-acid polypeptide reads, in one-letter code: Flagellar hook-basal body complex protein FliE 2 (109 aa).

It belongs to the FliE family.

It is found in the bacterial flagellum basal body. The protein is Flagellar hook-basal body complex protein FliE 2 (fliE2) of Bradyrhizobium diazoefficiens (strain JCM 10833 / BCRC 13528 / IAM 13628 / NBRC 14792 / USDA 110).